The sequence spans 607 residues: Fucose-1-phosphate guanylyltransferase (607 aa).

The interval 1–21 (MRAVRRGLREGGAMAAARDPP) is disordered.

In terms of tissue distribution, expressed in many tissues.

The protein localises to the cytoplasm. The enzyme catalyses beta-L-fucose 1-phosphate + GTP + H(+) = GDP-beta-L-fucose + diphosphate. Its function is as follows. Catalyzes the formation of GDP-L-fucose from GTP and L-fucose-1-phosphate. Functions as a salvage pathway to reutilize L-fucose arising from the turnover of glycoproteins and glycolipids. This Homo sapiens (Human) protein is Fucose-1-phosphate guanylyltransferase.